The primary structure comprises 249 residues: 2,3-bisphosphoglycerate-dependent phosphoglycerate mutase (249 aa).

Residues 9 to 16 (RHGQSQWN), 22 to 23 (TG), R61, 88 to 91 (ERHY), K99, 115 to 116 (RR), and 184 to 185 (GN) each bind substrate. Catalysis depends on H10, which acts as the Tele-phosphohistidine intermediate. E88 serves as the catalytic Proton donor/acceptor.

The protein belongs to the phosphoglycerate mutase family. BPG-dependent PGAM subfamily. In terms of assembly, homodimer.

It carries out the reaction (2R)-2-phosphoglycerate = (2R)-3-phosphoglycerate. It participates in carbohydrate degradation; glycolysis; pyruvate from D-glyceraldehyde 3-phosphate: step 3/5. In terms of biological role, catalyzes the interconversion of 2-phosphoglycerate and 3-phosphoglycerate. This is 2,3-bisphosphoglycerate-dependent phosphoglycerate mutase from Xanthomonas campestris pv. campestris (strain 8004).